A 289-amino-acid polypeptide reads, in one-letter code: Putative transmembrane protein ORF111 (289 aa).

5 consecutive transmembrane segments (helical) span residues 1-21, 112-132, 151-171, 189-209, and 261-281; these read MIGPIVVLHLICAVGFSIFML, AIITIAIVGVVIGVFIIVCIA, IGITLFLLFLTLAGSVAFIVI, LNISWGFVCGILAISYSTSIL, and YLLTLCLLWWPAITIYFIGVG.

It is found in the host membrane. The polypeptide is Putative transmembrane protein ORF111 (Ostreid herpesvirus 1 (isolate France) (OsHV-1)).